Consider the following 230-residue polypeptide: MAHPSQLGFQDAASPVMEELLHFHDHALMIVFLISTLVLYIIAATASTKLTDKYILDSQEIEVIWTIMPAVILILIALPSLRILYLMDEINDPHLTVKTMGHQWYWSYEYTDYDDLSFDSYMIPTQDLTPGQFRLLETDHRMVIPVDSPIRVLVSAEDVLHSWAVPSLGIKMDAVPGRLNQTAFIVSRPGVFYGQCSEICGANHSFMPIVVEAVPLEHFENWSSLMLEDA.

The Mitochondrial intermembrane portion of the chain corresponds to 1-14; that stretch reads MAHPSQLGFQDAAS. The chain crosses the membrane as a helical span at residues 15-45; the sequence is PVMEELLHFHDHALMIVFLISTLVLYIIAAT. Topologically, residues 46-59 are mitochondrial matrix; that stretch reads ASTKLTDKYILDSQ. A helical transmembrane segment spans residues 60–87; that stretch reads EIEVIWTIMPAVILILIALPSLRILYLM. The Mitochondrial intermembrane segment spans residues 88-230; the sequence is DEINDPHLTV…NWSSLMLEDA (143 aa). Residues His-161, Cys-196, Glu-198, Cys-200, His-204, and Met-207 each coordinate Cu cation. Residue Glu-198 participates in Mg(2+) binding.

This sequence belongs to the cytochrome c oxidase subunit 2 family. As to quaternary structure, component of the cytochrome c oxidase (complex IV, CIV), a multisubunit enzyme composed of 14 subunits. The complex is composed of a catalytic core of 3 subunits MT-CO1, MT-CO2 and MT-CO3, encoded in the mitochondrial DNA, and 11 supernumerary subunits COX4I, COX5A, COX5B, COX6A, COX6B, COX6C, COX7A, COX7B, COX7C, COX8 and NDUFA4, which are encoded in the nuclear genome. The complex exists as a monomer or a dimer and forms supercomplexes (SCs) in the inner mitochondrial membrane with NADH-ubiquinone oxidoreductase (complex I, CI) and ubiquinol-cytochrome c oxidoreductase (cytochrome b-c1 complex, complex III, CIII), resulting in different assemblies (supercomplex SCI(1)III(2)IV(1) and megacomplex MCI(2)III(2)IV(2)). Found in a complex with TMEM177, COA6, COX18, COX20, SCO1 and SCO2. Interacts with TMEM177 in a COX20-dependent manner. Interacts with COX20. Interacts with COX16. Cu cation serves as cofactor.

The protein resides in the mitochondrion inner membrane. The enzyme catalyses 4 Fe(II)-[cytochrome c] + O2 + 8 H(+)(in) = 4 Fe(III)-[cytochrome c] + 2 H2O + 4 H(+)(out). Functionally, component of the cytochrome c oxidase, the last enzyme in the mitochondrial electron transport chain which drives oxidative phosphorylation. The respiratory chain contains 3 multisubunit complexes succinate dehydrogenase (complex II, CII), ubiquinol-cytochrome c oxidoreductase (cytochrome b-c1 complex, complex III, CIII) and cytochrome c oxidase (complex IV, CIV), that cooperate to transfer electrons derived from NADH and succinate to molecular oxygen, creating an electrochemical gradient over the inner membrane that drives transmembrane transport and the ATP synthase. Cytochrome c oxidase is the component of the respiratory chain that catalyzes the reduction of oxygen to water. Electrons originating from reduced cytochrome c in the intermembrane space (IMS) are transferred via the dinuclear copper A center (CU(A)) of subunit 2 and heme A of subunit 1 to the active site in subunit 1, a binuclear center (BNC) formed by heme A3 and copper B (CU(B)). The BNC reduces molecular oxygen to 2 water molecules using 4 electrons from cytochrome c in the IMS and 4 protons from the mitochondrial matrix. This Tetraodon nigroviridis (Spotted green pufferfish) protein is Cytochrome c oxidase subunit 2 (mt-co2).